The primary structure comprises 359 residues: Protein-glutamate methylesterase/protein-glutamine glutaminase 2 (359 aa).

Residues 6–123 (KVMIVDDSAL…KSFLEDASND (118 aa)) form the Response regulatory domain. Aspartate 57 is subject to 4-aspartylphosphate. The region spanning 167 to 359 (ERTTDQLVAI…GAIVGYGKSC (193 aa)) is the CheB-type methylesterase domain. Catalysis depends on residues serine 179, histidine 205, and aspartate 301.

Belongs to the CheB family. In terms of processing, phosphorylated by CheA. Phosphorylation of the N-terminal regulatory domain activates the methylesterase activity.

Its subcellular location is the cytoplasm. It carries out the reaction [protein]-L-glutamate 5-O-methyl ester + H2O = L-glutamyl-[protein] + methanol + H(+). The catalysed reaction is L-glutaminyl-[protein] + H2O = L-glutamyl-[protein] + NH4(+). Its function is as follows. Involved in chemotaxis. Part of a chemotaxis signal transduction system that modulates chemotaxis in response to various stimuli. Catalyzes the demethylation of specific methylglutamate residues introduced into the chemoreceptors (methyl-accepting chemotaxis proteins or MCP) by CheR. Also mediates the irreversible deamidation of specific glutamine residues to glutamic acid. This Dechloromonas aromatica (strain RCB) protein is Protein-glutamate methylesterase/protein-glutamine glutaminase 2.